Reading from the N-terminus, the 315-residue chain is HTH-type transcriptional regulator TreR (315 aa).

The HTH lacI-type domain maps to 5-59; that stretch reads LTIKDIARLSGVGKSTVSRVLNNESGVSQLTRERVEAVMNQHGFSPSRSARAMRG. The segment at residues 7–26 is a DNA-binding region (H-T-H motif); the sequence is IKDIARLSGVGKSTVSRVLN. Alpha,alpha-trehalose 6-phosphate is bound by residues 71–77, Gly-126, Arg-147, 187–190, Arg-194, Thr-242, and Tyr-284; these read RLDSLSE and DVTT.

As to quaternary structure, homodimer.

In terms of biological role, repressor of the treBC operon. It is able to bind trehalose-6-phosphate and trehalose. This Escherichia coli (strain K12) protein is HTH-type transcriptional regulator TreR (treR).